The following is a 107-amino-acid chain: Integration host factor subunit alpha (107 aa).

Belongs to the bacterial histone-like protein family. Heterodimer of an alpha and a beta chain.

Its function is as follows. This protein is one of the two subunits of integration host factor, a specific DNA-binding protein that functions in genetic recombination as well as in transcriptional and translational control. This chain is Integration host factor subunit alpha, found in Brucella anthropi (strain ATCC 49188 / DSM 6882 / CCUG 24695 / JCM 21032 / LMG 3331 / NBRC 15819 / NCTC 12168 / Alc 37) (Ochrobactrum anthropi).